The following is a 274-amino-acid chain: UPF0758 protein RHECIAT_CH0001935 (274 aa).

The disordered stretch occupies residues M1–G57. The region spanning V152–I274 is the MPN domain. Residues H223, H225, and D236 each coordinate Zn(2+). The JAMM motif motif lies at H223–D236.

The protein belongs to the UPF0758 family.

This chain is UPF0758 protein RHECIAT_CH0001935, found in Rhizobium etli (strain CIAT 652).